The following is a 276-amino-acid chain: Golgi apparatus membrane protein TVP23 homolog C (276 aa).

Residue M1 is modified to N-acetylmethionine. Residues 1-21 (MLQQDSNDDTEDVSLFDAEEE) are disordered. A run of 2 helical transmembrane segments spans residues 52 to 72 (LLCELLSSSFITCMVTIILLL) and 126 to 146 (IFWLGLIACSVLWVIFAFSAL). Residues 254 to 276 (GESPNSRGTGEPGPKFHLASGMH) are disordered.

Belongs to the TVP23 family.

It is found in the membrane. This is Golgi apparatus membrane protein TVP23 homolog C (TVP23C) from Homo sapiens (Human).